The chain runs to 355 residues: Uroporphyrinogen decarboxylase (355 aa).

Substrate is bound by residues 27-31 (RQAGR), Asp-77, Tyr-154, Thr-209, and His-328.

The protein belongs to the uroporphyrinogen decarboxylase family. Homodimer.

It is found in the cytoplasm. The catalysed reaction is uroporphyrinogen III + 4 H(+) = coproporphyrinogen III + 4 CO2. The protein operates within porphyrin-containing compound metabolism; protoporphyrin-IX biosynthesis; coproporphyrinogen-III from 5-aminolevulinate: step 4/4. In terms of biological role, catalyzes the decarboxylation of four acetate groups of uroporphyrinogen-III to yield coproporphyrinogen-III. In Vibrio cholerae serotype O1 (strain ATCC 39541 / Classical Ogawa 395 / O395), this protein is Uroporphyrinogen decarboxylase.